A 317-amino-acid polypeptide reads, in one-letter code: Ribosomal protein L11 methyltransferase (317 aa).

Residues T158, G179, D201, and N244 each contribute to the S-adenosyl-L-methionine site.

The protein belongs to the methyltransferase superfamily. PrmA family.

The protein resides in the cytoplasm. The catalysed reaction is L-lysyl-[protein] + 3 S-adenosyl-L-methionine = N(6),N(6),N(6)-trimethyl-L-lysyl-[protein] + 3 S-adenosyl-L-homocysteine + 3 H(+). Its function is as follows. Methylates ribosomal protein L11. This chain is Ribosomal protein L11 methyltransferase, found in Streptococcus mutans serotype c (strain ATCC 700610 / UA159).